A 192-amino-acid chain; its full sequence is Cytidylate kinase (192 aa).

Residue 7–15 (GPAGSGKST) participates in ATP binding.

Belongs to the cytidylate kinase family. Type 2 subfamily.

The protein resides in the cytoplasm. The enzyme catalyses CMP + ATP = CDP + ADP. It carries out the reaction dCMP + ATP = dCDP + ADP. The polypeptide is Cytidylate kinase (Haloarcula marismortui (strain ATCC 43049 / DSM 3752 / JCM 8966 / VKM B-1809) (Halobacterium marismortui)).